The following is a 176-amino-acid chain: Methylmalonyl-CoA epimerase, mitochondrial (176 aa).

The transit peptide at 1–36 (MARVLKAAAANAVGLFSRLQAPIPTVRASSTSQPLD) directs the protein to the mitochondrion. A VOC domain is found at 47–176 (RLNHVAIAVP…GGVLVELEQA (130 aa)). His50 contacts Co(2+). N6-succinyllysine is present on Lys114. His122 contacts Co(2+). At Lys150 the chain carries N6-acetyllysine; alternate. Lys150 is subject to N6-succinyllysine; alternate. Residue Glu172 coordinates Co(2+).

The protein belongs to the methylmalonyl-CoA epimerase family.

The protein resides in the mitochondrion. It carries out the reaction (R)-methylmalonyl-CoA = (S)-methylmalonyl-CoA. In terms of biological role, methylmalonyl-CoA epimerase involved in propionyl-CoA metabolism. This chain is Methylmalonyl-CoA epimerase, mitochondrial, found in Homo sapiens (Human).